The chain runs to 256 residues: Phosphatidylglycerol--prolipoprotein diacylglyceryl transferase 2 (256 aa).

The next 3 helical transmembrane spans lie at 11-31 (LKIY…TLLF), 46-66 (FNAT…LYII), and 83-103 (FGNG…IALC). R130 provides a ligand contact to a 1,2-diacyl-sn-glycero-3-phospho-(1'-sn-glycerol). 3 consecutive transmembrane segments (helical) span residues 142–162 (AETT…PAGV), 164–184 (LYPT…FLLW), and 221–241 (VGLL…GILL).

The protein belongs to the Lgt family.

It is found in the cell membrane. It carries out the reaction L-cysteinyl-[prolipoprotein] + a 1,2-diacyl-sn-glycero-3-phospho-(1'-sn-glycerol) = an S-1,2-diacyl-sn-glyceryl-L-cysteinyl-[prolipoprotein] + sn-glycerol 1-phosphate + H(+). It participates in protein modification; lipoprotein biosynthesis (diacylglyceryl transfer). Functionally, catalyzes the transfer of the diacylglyceryl group from phosphatidylglycerol to the sulfhydryl group of the N-terminal cysteine of a prolipoprotein, the first step in the formation of mature lipoproteins. This is Phosphatidylglycerol--prolipoprotein diacylglyceryl transferase 2 from Clostridium perfringens (strain 13 / Type A).